We begin with the raw amino-acid sequence, 672 residues long: DNA polymerase eta (672 aa).

The 241-residue stretch at 14-254 (IAHVDMDCFY…LPIKKMKQLG (241 aa)) folds into the UmuC domain. Residues aspartate 18 and methionine 19 each coordinate Mg(2+). Mn(2+) contacts are provided by aspartate 18 and methionine 19. The a 2'-deoxyribonucleoside 5'-triphosphate site is built by tyrosine 23 and arginine 60. Mg(2+) contacts are provided by aspartate 120 and glutamate 121. Residues aspartate 120 and glutamate 121 each coordinate Mn(2+). Glutamate 121 serves as the catalytic Proton acceptor. 2 DNA-binding regions span residues 318 to 325 (KTFPGPRA) and 362 to 383 (TLHA…PSKS). 2 disordered regions span residues 521–617 (VSCP…TDWG) and 648–672 (QFNT…PLNR). Polar residues-rich tracts occupy residues 523–544 (CPSN…TQTK) and 570–586 (YNAT…DSTV). Composition is skewed to low complexity over residues 587–602 (SSAS…SHNS) and 651–662 (TGKSKGDGSTSS).

The protein belongs to the DNA polymerase type-Y family. As to quaternary structure, interacts with PCNA1 and PCNA2. The interaction with PCNA2 is required for translesion synthesis (TLS) to repair UV photoproducts. Requires Mg(2+) as cofactor. Mn(2+) is required as a cofactor. Constitutively expressed in roots, stems, leaves, flowers and siliques.

Its subcellular location is the nucleus. It catalyses the reaction DNA(n) + a 2'-deoxyribonucleoside 5'-triphosphate = DNA(n+1) + diphosphate. Its activity is regulated as follows. The enzyme in complex with the DNA substrate binds a third divalent metal cation. The binding of this third divalent cation, which is coordinated by water molecules and two oxygen atoms from DNA and dNTP, is essential for catalyzing the DNA synthesis. Error-free DNA polymerase specifically involved in DNA repair. Plays an important role in translesion synthesis (TLS), where the normal high fidelity DNA polymerases cannot proceed and DNA synthesis stalls. Plays an important role in the repair of UV-induced pyrimidine dimers and confers resistance to ultraviolet light. Depending on the context, it inserts the correct base, but may cause base transitions and transversions. Forms a Schiff base with 5'-deoxyribose phosphate at abasic sites, but does not have lyase activity. Targets POLI to replication foci. Exhibits cyclobutane dimer nonmutagenic bypass activity in vitro. This Arabidopsis thaliana (Mouse-ear cress) protein is DNA polymerase eta (POLH).